The primary structure comprises 425 residues: Serine hydroxymethyltransferase (425 aa).

(6S)-5,6,7,8-tetrahydrofolate contacts are provided by residues L124 and 128–130 (GHL). The residue at position 233 (K233) is an N6-(pyridoxal phosphate)lysine.

Belongs to the SHMT family. In terms of assembly, homodimer. Requires pyridoxal 5'-phosphate as cofactor.

The protein resides in the cytoplasm. The catalysed reaction is (6R)-5,10-methylene-5,6,7,8-tetrahydrofolate + glycine + H2O = (6S)-5,6,7,8-tetrahydrofolate + L-serine. It functions in the pathway one-carbon metabolism; tetrahydrofolate interconversion. The protein operates within amino-acid biosynthesis; glycine biosynthesis; glycine from L-serine: step 1/1. Catalyzes the reversible interconversion of serine and glycine with tetrahydrofolate (THF) serving as the one-carbon carrier. This reaction serves as the major source of one-carbon groups required for the biosynthesis of purines, thymidylate, methionine, and other important biomolecules. Also exhibits THF-independent aldolase activity toward beta-hydroxyamino acids, producing glycine and aldehydes, via a retro-aldol mechanism. This chain is Serine hydroxymethyltransferase, found in Clavibacter sepedonicus (Clavibacter michiganensis subsp. sepedonicus).